Reading from the N-terminus, the 276-residue chain is Undecaprenyl-diphosphatase (276 aa).

6 consecutive transmembrane segments (helical) span residues 43 to 63 (RAMA…VWEF), 85 to 105 (INLL…ADLI), 109 to 129 (LFNP…MLWA), 184 to 204 (ATEF…VYSG), 218 to 238 (VFAI…KGLL), and 254 to 274 (IAFG…WTAA).

The protein belongs to the UppP family.

It localises to the cell inner membrane. The enzyme catalyses di-trans,octa-cis-undecaprenyl diphosphate + H2O = di-trans,octa-cis-undecaprenyl phosphate + phosphate + H(+). Functionally, catalyzes the dephosphorylation of undecaprenyl diphosphate (UPP). Confers resistance to bacitracin. This is Undecaprenyl-diphosphatase from Pseudomonas fluorescens (strain ATCC BAA-477 / NRRL B-23932 / Pf-5).